Consider the following 199-residue polypeptide: dITP/XTP pyrophosphatase (199 aa).

7–12 (TGNKGK) contributes to the substrate binding site. Catalysis depends on Asp-71, which acts as the Proton acceptor. Asp-71 lines the Mg(2+) pocket. Residues Ala-72, 154–157 (FGYD), Lys-177, and 182–183 (HR) each bind substrate.

The protein belongs to the HAM1 NTPase family. Homodimer. Mg(2+) serves as cofactor.

The enzyme catalyses XTP + H2O = XMP + diphosphate + H(+). It catalyses the reaction dITP + H2O = dIMP + diphosphate + H(+). The catalysed reaction is ITP + H2O = IMP + diphosphate + H(+). In terms of biological role, pyrophosphatase that catalyzes the hydrolysis of nucleoside triphosphates to their monophosphate derivatives, with a high preference for the non-canonical purine nucleotides XTP (xanthosine triphosphate), dITP (deoxyinosine triphosphate) and ITP. Seems to function as a house-cleaning enzyme that removes non-canonical purine nucleotides from the nucleotide pool, thus preventing their incorporation into DNA/RNA and avoiding chromosomal lesions. This is dITP/XTP pyrophosphatase from Bdellovibrio bacteriovorus (strain ATCC 15356 / DSM 50701 / NCIMB 9529 / HD100).